The primary structure comprises 94 residues: MLYLIIYDVPATKAGNKRRTRLFDLLSGYGKWRQFSVFECFLSVKQFAKLQTAMEKLIKLDEDAVCIYVLDENTVQRTITYGTPQPEKPGSIII.

Mg(2+) is bound at residue Asp-8.

It belongs to the CRISPR-associated endoribonuclease Cas2 protein family. Homodimer, forms a heterotetramer with a Cas1 homodimer. The cofactor is Mg(2+).

Its function is as follows. CRISPR (clustered regularly interspaced short palindromic repeat), is an adaptive immune system that provides protection against mobile genetic elements (viruses, transposable elements and conjugative plasmids). CRISPR clusters contain sequences complementary to antecedent mobile elements and target invading nucleic acids. CRISPR clusters are transcribed and processed into CRISPR RNA (crRNA). Functions as a ssRNA-specific endoribonuclease. Involved in the integration of spacer DNA into the CRISPR cassette. In Synechocystis sp. (strain ATCC 27184 / PCC 6803 / Kazusa), this protein is CRISPR-associated endoribonuclease Cas2 1.